A 1647-amino-acid chain; its full sequence is Putative RNA exonuclease pqe-1 (1647 aa).

Disordered regions lie at residues 1 to 199 (MFNG…QVQN), 274 to 393 (QTPA…TSLP), 515 to 619 (MMQQ…KPVI), and 641 to 665 (QVKQ…PTAR). 2 stretches are compositionally biased toward low complexity: residues 30–64 (GPSQ…SGAS) and 99–131 (TQPQ…AAAA). Polar residues predominate over residues 143 to 170 (SREQGNAHQPTAGQIPQSSNQPAQQTHN). Composition is skewed to low complexity over residues 274 to 297 (QTPA…NPQQ) and 515 to 526 (MMQQQAMQMQMQ). Positions 527 to 540 (NPPPVHQQPPPQQP) are enriched in pro residues. The segment covering 541–555 (PQQQRQKQQRSQPAP) has biased composition (low complexity). Over residues 592–601 (SKIEPVDVKP) the composition is skewed to basic and acidic residues. Residues 650-664 (SSTSDATKSDAAPTA) show a composition bias toward low complexity. Positions 686–726 (SAKKFERMKAEAEDKEDMKKKIAALQEALFNIQEERRVEKE) form a coiled coil. Positions 736–756 (AVPQNQPASSVQIAQVSTSES) are enriched in polar residues. Residues 736 to 1174 (AVPQNQPASS…LRNKKHTTEE (439 aa)) are disordered. Residues 761-772 (TSEAAATETMTS) show a composition bias toward low complexity. A compositionally biased stretch (acidic residues) spans 783–793 (TEGEQEEDEDE). The span at 822–833 (RSDEKREKRHVS) shows a compositional bias: basic and acidic residues. Residues 878–905 (DNEDDDADSFVVGDDEPIEYEEEDEDDM) are compositionally biased toward acidic residues. Positions 977–992 (TPTASSSMSSSTLSYC) are enriched in low complexity. The segment covering 1018 to 1031 (KTREENRERKRLAQ) has biased composition (basic and acidic residues). A compositionally biased stretch (polar residues) spans 1038-1054 (SETTGVRRTLRSTQDNS). Composition is skewed to basic and acidic residues over residues 1076–1088 (AKSS…EKQK) and 1139–1174 (NHTE…TTEE). The stretch at 1142-1187 (EMLDKRNKESEEKRRKDRDELERLRNKKHTTEEEKIKMARLQNALK) forms a coiled coil. Residues 1477–1637 (RVYALDCEMV…IFYGLRNPES (161 aa)) enclose the Exonuclease domain.

It belongs to the REXO1/REXO3 family. As to expression, expressed in the excretory canal, vulval cells, the intestine and in head and tail neurons including ASH, RIC and AIZ neurons.

The protein localises to the nucleus. Its function is as follows. Putative RNA exonuclease which protects neurons from the toxic effects of expanded poly-Q disease proteins. It is unknown whether this is via participation in the pathogenic mechanism underlying poly-Q-induced neurodegeneration or if it is by acting as a genetic modifier of the age of onset or progression of neurodegeneration. Regulates gene expression in neurons. This chain is Putative RNA exonuclease pqe-1, found in Caenorhabditis elegans.